A 437-amino-acid polypeptide reads, in one-letter code: MVNLSRSVALISVFLLPLLSFSFSVDNPTDRRVLVLLDDLSLKSSHSIFFNTLKSRGFDLDFKLAEDSKLALQRYGQYLYDGLIIFAPSTERFGGSLDSKSIADFVDSGRDLILSADTAASDLIRGIATECGVDFDEDSSAMVIDHTSFSVSDVDGDHTLIAADDLVKSDVILGKTKIEAPVLFRGVAHSLNPTNNLVLKVLSASPSAYSANPSSKLSSPPQLTGSSISLVSVMQARNNARVVISGSVQLFSDRLIRSGVQKAGSPNQYEKSGNEQFVTELSKWVFHERGHLKAGNLVHHRVGETDEPAIYRIKDDLEFSVEIYEWSGKSWEPYVANDVQVQFYMMSPYVLKTLSTDKKGLFHTSFKVPDVYGVFQFKVEYEKLGYTTLSLSKQIPVRPYRHNEYERFIPTAYPYYGACFTTMAGFFVFSFVYLYHK.

An N-terminal signal peptide occupies residues 1-24 (MVNLSRSVALISVFLLPLLSFSFS). The Lumenal portion of the chain corresponds to 25 to 414 (VDNPTDRRVL…YERFIPTAYP (390 aa)). The chain crosses the membrane as a helical span at residues 415–435 (YYGACFTTMAGFFVFSFVYLY). Residues 436-437 (HK) are Cytoplasmic-facing.

It belongs to the DDOST 48 kDa subunit family. Component of the oligosaccharyltransferase (OST) complex.

The protein resides in the endoplasmic reticulum membrane. Its pathway is protein modification; protein glycosylation. Functionally, subunit of the oligosaccharyl transferase (OST) complex that catalyzes the initial transfer of a defined glycan (Glc(3)Man(9)GlcNAc(2) in eukaryotes) from the lipid carrier dolichol-pyrophosphate to an asparagine residue within an Asn-X-Ser/Thr consensus motif in nascent polypeptide chains, the first step in protein N-glycosylation. N-glycosylation occurs cotranslationally and the complex associates with the Sec61 complex at the channel-forming translocon complex that mediates protein translocation across the endoplasmic reticulum (ER). All subunits are required for a maximal enzyme activity. This Arabidopsis thaliana (Mouse-ear cress) protein is Dolichyl-diphosphooligosaccharide--protein glycosyltransferase 48 kDa subunit (OST48).